We begin with the raw amino-acid sequence, 524 residues long: Importin subunit alpha-1 (524 aa).

The segment at 1 to 42 (MGDEFRPSHEERSKMYKSNVRDQNEMRRKRREDEVQIRKNRR) is disordered. One can recognise an IBB domain in the interval 1–59 (MGDEFRPSHEERSKMYKSNVRDQNEMRRKRREDEVQIRKNRRDEKFERNRQITVQRSLS).

This sequence belongs to the importin alpha family. Forms a complex with an importin beta subunit. As to expression, adult germline tissues.

It is found in the cytoplasm. Functionally, binds specifically and directly to substrates containing either a simple or bipartite NLS motif. Promotes docking of import substrates to the nuclear envelope. Seems to act as a cytosolic receptor for both simple and bipartite NLS motifs. This Caenorhabditis elegans protein is Importin subunit alpha-1 (ima-1).